We begin with the raw amino-acid sequence, 72 residues long: Conotoxin VnMKLT2-011 (72 aa).

An N-terminal signal peptide occupies residues 1–23; it reads MMKLTCVLIIAVLFLTACQLTTA. The propeptide occupies 24-42; the sequence is ETRDEYRAVRSSDEVRNSR. Cystine bridges form between C44–C57, C51–C62, and C56–C71.

Belongs to the conotoxin O1 superfamily. Expressed by the venom duct.

It localises to the secreted. This is Conotoxin VnMKLT2-011 from Conus ventricosus (Mediterranean cone).